The primary structure comprises 287 residues: Cell division protein ZipA (287 aa).

A topological domain (periplasmic) is located at residue methionine 1. A helical membrane pass occupies residues 2–22 (EIGLREWLIVIGIIVIAGILF). At 23–287 (DGWRRMRGSK…ERRALTQRRG (265 aa)) the chain is on the cytoplasmic side. A disordered region spans residues 48 to 140 (DEEETTSAEV…PTQRITEDKD (93 aa)). Composition is skewed to basic and acidic residues over residues 64 to 77 (LDTH…EHDL), 85 to 104 (REGK…KDEP), and 121 to 140 (GRDD…EDKD).

The protein belongs to the ZipA family. Interacts with FtsZ via their C-terminal domains.

It localises to the cell inner membrane. In terms of biological role, essential cell division protein that stabilizes the FtsZ protofilaments by cross-linking them and that serves as a cytoplasmic membrane anchor for the Z ring. Also required for the recruitment to the septal ring of downstream cell division proteins. This is Cell division protein ZipA from Pseudomonas syringae pv. syringae (strain B728a).